The primary structure comprises 287 residues: 4-diphosphocytidyl-2-C-methyl-D-erythritol kinase (287 aa).

Lys14 is a catalytic residue. ATP is bound at residue 98 to 108 (PPGAGLGGGSS). Asp140 is an active-site residue.

This sequence belongs to the GHMP kinase family. IspE subfamily.

It carries out the reaction 4-CDP-2-C-methyl-D-erythritol + ATP = 4-CDP-2-C-methyl-D-erythritol 2-phosphate + ADP + H(+). It functions in the pathway isoprenoid biosynthesis; isopentenyl diphosphate biosynthesis via DXP pathway; isopentenyl diphosphate from 1-deoxy-D-xylulose 5-phosphate: step 3/6. Catalyzes the phosphorylation of the position 2 hydroxy group of 4-diphosphocytidyl-2C-methyl-D-erythritol. In Methylacidiphilum infernorum (isolate V4) (Methylokorus infernorum (strain V4)), this protein is 4-diphosphocytidyl-2-C-methyl-D-erythritol kinase.